The following is a 653-amino-acid chain: Mediator of RNA polymerase II transcription subunit 17 (653 aa).

The tract at residues Ser246–Ser271 is disordered.

This sequence belongs to the Mediator complex subunit 17 family. As to quaternary structure, component of the Mediator complex.

It is found in the nucleus. Functionally, component of the Mediator complex, a coactivator involved in the regulated transcription of nearly all RNA polymerase II-dependent genes. Mediator functions as a bridge to convey information from gene-specific regulatory proteins to the basal RNA polymerase II transcription machinery. The Mediator complex, having a compact conformation in its free form, is recruited to promoters by direct interactions with regulatory proteins and serves for the assembly of a functional preinitiation complex with RNA polymerase II and the general transcription factors. The chain is Mediator of RNA polymerase II transcription subunit 17 (MED17) from Arabidopsis thaliana (Mouse-ear cress).